We begin with the raw amino-acid sequence, 261 residues long: Cytochrome c oxidase subunit 3 (261 aa).

At 1 to 15 (MTHQTHAYHMVNPSP) the chain is on the mitochondrial matrix side. The helical transmembrane segment at 16-34 (WPLTGALSALLMTSGLIMW) threads the bilayer. At 35–40 (FHFNSM) the chain is on the mitochondrial intermembrane side. A helical membrane pass occupies residues 41 to 66 (YLLMLGLTTNTLTMYQWWRDIVREST). Residues 67–72 (FQGHHT) lie on the Mitochondrial matrix side of the membrane. Residues 73–105 (PIVQKGLRYGMILFIVSEVFFFAGFFWAFYHSS) form a helical membrane-spanning segment. At 106 to 128 (LAPTPELGGCWPPTGITPLNPME) the chain is on the mitochondrial intermembrane side. A helical transmembrane segment spans residues 129–152 (VPLLNTSVLLASGVSITWAHHSLM). Topologically, residues 153–155 (EGN) are mitochondrial matrix. A helical membrane pass occupies residues 156-183 (RKHMLQALFITISLGVYFTLLQASEYYE). Topologically, residues 184 to 190 (TPFTISD) are mitochondrial intermembrane. A helical transmembrane segment spans residues 191-223 (GIYGSTFFMATGFHGLHVIIGSTFLIVCFMRQL). At 224–232 (KFHFTSNHH) the chain is on the mitochondrial matrix side. The chain crosses the membrane as a helical span at residues 233–256 (FGFEAAAWYWHFVDVVWLFLYVSI). Topologically, residues 257 to 261 (YWWGS) are mitochondrial intermembrane.

This sequence belongs to the cytochrome c oxidase subunit 3 family. As to quaternary structure, component of the cytochrome c oxidase (complex IV, CIV), a multisubunit enzyme composed of 14 subunits. The complex is composed of a catalytic core of 3 subunits MT-CO1, MT-CO2 and MT-CO3, encoded in the mitochondrial DNA, and 11 supernumerary subunits COX4I, COX5A, COX5B, COX6A, COX6B, COX6C, COX7A, COX7B, COX7C, COX8 and NDUFA4, which are encoded in the nuclear genome. The complex exists as a monomer or a dimer and forms supercomplexes (SCs) in the inner mitochondrial membrane with NADH-ubiquinone oxidoreductase (complex I, CI) and ubiquinol-cytochrome c oxidoreductase (cytochrome b-c1 complex, complex III, CIII), resulting in different assemblies (supercomplex SCI(1)III(2)IV(1) and megacomplex MCI(2)III(2)IV(2)).

Its subcellular location is the mitochondrion inner membrane. It carries out the reaction 4 Fe(II)-[cytochrome c] + O2 + 8 H(+)(in) = 4 Fe(III)-[cytochrome c] + 2 H2O + 4 H(+)(out). In terms of biological role, component of the cytochrome c oxidase, the last enzyme in the mitochondrial electron transport chain which drives oxidative phosphorylation. The respiratory chain contains 3 multisubunit complexes succinate dehydrogenase (complex II, CII), ubiquinol-cytochrome c oxidoreductase (cytochrome b-c1 complex, complex III, CIII) and cytochrome c oxidase (complex IV, CIV), that cooperate to transfer electrons derived from NADH and succinate to molecular oxygen, creating an electrochemical gradient over the inner membrane that drives transmembrane transport and the ATP synthase. Cytochrome c oxidase is the component of the respiratory chain that catalyzes the reduction of oxygen to water. Electrons originating from reduced cytochrome c in the intermembrane space (IMS) are transferred via the dinuclear copper A center (CU(A)) of subunit 2 and heme A of subunit 1 to the active site in subunit 1, a binuclear center (BNC) formed by heme A3 and copper B (CU(B)). The BNC reduces molecular oxygen to 2 water molecules using 4 electrons from cytochrome c in the IMS and 4 protons from the mitochondrial matrix. The protein is Cytochrome c oxidase subunit 3 (MT-CO3) of Halichoerus grypus (Gray seal).